Here is a 220-residue protein sequence, read N- to C-terminus: Probable septum site-determining protein MinC (220 aa).

The protein belongs to the MinC family. In terms of assembly, interacts with MinD and FtsZ.

Its function is as follows. Cell division inhibitor that blocks the formation of polar Z ring septums. Rapidly oscillates between the poles of the cell to destabilize FtsZ filaments that have formed before they mature into polar Z rings. Prevents FtsZ polymerization. The chain is Probable septum site-determining protein MinC from Vibrio vulnificus (strain CMCP6).